The sequence spans 130 residues: Small ribosomal subunit protein uS8 (130 aa).

This sequence belongs to the universal ribosomal protein uS8 family. Part of the 30S ribosomal subunit. Contacts proteins S5 and S12.

In terms of biological role, one of the primary rRNA binding proteins, it binds directly to 16S rRNA central domain where it helps coordinate assembly of the platform of the 30S subunit. The chain is Small ribosomal subunit protein uS8 from Saccharophagus degradans (strain 2-40 / ATCC 43961 / DSM 17024).